A 490-amino-acid chain; its full sequence is Putative alanine aminotransferase (490 aa).

A157, S158, Y183, N239, and S308 together coordinate pyridoxal 5'-phosphate. Position 311 is an N6-(pyridoxal phosphate)lysine (K311). R320 is a binding site for pyridoxal 5'-phosphate.

The protein belongs to the class-I pyridoxal-phosphate-dependent aminotransferase family. Alanine aminotransferase subfamily. As to quaternary structure, homodimer. Pyridoxal 5'-phosphate is required as a cofactor.

The protein resides in the cytoplasm. It is found in the mitochondrion. It carries out the reaction L-alanine + 2-oxoglutarate = pyruvate + L-glutamate. The protein operates within amino-acid degradation; L-alanine degradation via transaminase pathway; pyruvate from L-alanine: step 1/1. In terms of biological role, alanine aminotransferase involved in both alanine biosynthesis and utilization. This chain is Putative alanine aminotransferase (alt1), found in Schizosaccharomyces pombe (strain 972 / ATCC 24843) (Fission yeast).